The following is a 348-amino-acid chain: Holliday junction branch migration complex subunit RuvB (348 aa).

Residues 1 to 10 (MAIVSSSSGR) are compositionally biased toward low complexity. The tract at residues 1-37 (MAIVSSSSGRKPPRRPEALMDPQQAPEEVVSRPEDKL) is disordered. A large ATPase domain (RuvB-L) region spans residues 13–198 (PRRPEALMDP…FGLIQRLEFY (186 aa)). 9 residues coordinate ATP: Leu-37, Arg-38, Gly-79, Lys-82, Thr-83, Thr-84, Arg-188, Tyr-198, and Arg-235. Thr-83 contributes to the Mg(2+) binding site. Residues 199-271 (GQGDLEAIVE…LVGEALSLHR (73 aa)) are small ATPAse domain (RuvB-S). The segment at 274-348 (HRGLDASDRR…AARSHLAEAA (75 aa)) is head domain (RuvB-H). Residues Arg-329 and Arg-334 each contribute to the DNA site.

The protein belongs to the RuvB family. In terms of assembly, homohexamer. Forms an RuvA(8)-RuvB(12)-Holliday junction (HJ) complex. HJ DNA is sandwiched between 2 RuvA tetramers; dsDNA enters through RuvA and exits via RuvB. An RuvB hexamer assembles on each DNA strand where it exits the tetramer. Each RuvB hexamer is contacted by two RuvA subunits (via domain III) on 2 adjacent RuvB subunits; this complex drives branch migration. In the full resolvosome a probable DNA-RuvA(4)-RuvB(12)-RuvC(2) complex forms which resolves the HJ.

The protein localises to the cytoplasm. The enzyme catalyses ATP + H2O = ADP + phosphate + H(+). Functionally, the RuvA-RuvB-RuvC complex processes Holliday junction (HJ) DNA during genetic recombination and DNA repair, while the RuvA-RuvB complex plays an important role in the rescue of blocked DNA replication forks via replication fork reversal (RFR). RuvA specifically binds to HJ cruciform DNA, conferring on it an open structure. The RuvB hexamer acts as an ATP-dependent pump, pulling dsDNA into and through the RuvAB complex. RuvB forms 2 homohexamers on either side of HJ DNA bound by 1 or 2 RuvA tetramers; 4 subunits per hexamer contact DNA at a time. Coordinated motions by a converter formed by DNA-disengaged RuvB subunits stimulates ATP hydrolysis and nucleotide exchange. Immobilization of the converter enables RuvB to convert the ATP-contained energy into a lever motion, pulling 2 nucleotides of DNA out of the RuvA tetramer per ATP hydrolyzed, thus driving DNA branch migration. The RuvB motors rotate together with the DNA substrate, which together with the progressing nucleotide cycle form the mechanistic basis for DNA recombination by continuous HJ branch migration. Branch migration allows RuvC to scan DNA until it finds its consensus sequence, where it cleaves and resolves cruciform DNA. This is Holliday junction branch migration complex subunit RuvB from Synechococcus sp. (strain CC9605).